A 389-amino-acid polypeptide reads, in one-letter code: UDP-D-apiose/UDP-D-xylose synthase 2 (389 aa).

Residues phenylalanine 28, isoleucine 29, aspartate 49, asparagine 76, isoleucine 77, and leucine 96 each coordinate NAD(+). The UDP-alpha-D-glucuronate site is built by tyrosine 105, threonine 139, glutamate 141, arginine 182, and tyrosine 185. Positions 185 and 189 each coordinate NAD(+). Catalysis depends on tyrosine 185, which acts as the Proton acceptor. Asparagine 214 is a binding site for UDP-alpha-D-glucuronate. NAD(+)-binding residues include tryptophan 215 and arginine 235. 7 residues coordinate UDP-alpha-D-glucuronate: lysine 251, valine 253, arginine 260, tyrosine 331, tyrosine 335, aspartate 337, and arginine 341.

Belongs to the NAD(P)-dependent epimerase/dehydratase family. In terms of assembly, homodimer and heterodimer with AXS1. The cofactor is NAD(+). Widely expressed with stronger expression in dark-grown seedlings, leaves and stems, and lower levels in flowers, siliques, pistils, pollen and roots.

It localises to the cytoplasm. It catalyses the reaction UDP-alpha-D-glucuronate + H(+) = UDP-alpha-D-xylose + CO2. The catalysed reaction is UDP-alpha-D-glucuronate + H(+) = UDP-alpha-D-apiose + CO2. Together with AXS1, catalyzes the conversion of UDP-D-glucuronate into a mixture of UDP-D-apiose (UDP-Api) as the main product and UDP-D-xylose to a lesser extent, via a cycle of oxidation and reduction. D-Apiose (3-C-hydroxymethyl-d-erythrose) is the only plant cell wall monosaccharide with a branched carbon skeleton and is found in rhamnogalacturonan II (RG-II), apiogalacturonan, and several apioglycosides. The polypeptide is UDP-D-apiose/UDP-D-xylose synthase 2 (Arabidopsis thaliana (Mouse-ear cress)).